The following is a 123-amino-acid chain: MPTMKQLIRNTRQPIRNVTKSPALRGCPQRRGTCTRVYTITPKKPNSALRKVARVRLTSGFEITAYIPGIGHNLQEHSVVLVRGGRVKDLPGVRYHIVRGTLDAVGVKDRQQGRSKYGAKKPK.

Belongs to the universal ribosomal protein uS12 family. In terms of assembly, part of the 30S ribosomal subunit.

The protein resides in the plastid. It is found in the chloroplast. With S4 and S5 plays an important role in translational accuracy. Located at the interface of the 30S and 50S subunits. This chain is Small ribosomal subunit protein uS12cz/uS12cy (rps12-A), found in Glycine max (Soybean).